The primary structure comprises 199 residues: COMM domain-containing protein 2 (199 aa).

Residues 123-190 (SYHNLEWRLD…QALEEMKTNH (68 aa)) form the COMM domain.

This sequence belongs to the COMM domain-containing protein 2 family. Component of the commander complex consisting of the CCC subcomplex and the retriever subcomplex. Component of the CCC (COMMD/CCDC22/CCDC93) subcomplex consisting of COMMD1, COMMD2, COMMD3, COMMD4, COMMD5, COMMD6, COMMD7, COMMD8, COMMD9, COMMD10, CCDC22 and CCDC93; within the complex forms a heterodimer with COMMD3. Interacts with RELA, RELB, NFKB1/p105, NFKB2/p100. Interacts with CCDC22, CCDC93, SCNN1B, CUL3, CUL4B, CUL5, CUL7.

It localises to the cytoplasm. Functionally, scaffold protein in the commander complex that is essential for endosomal recycling of transmembrane cargos; the commander complex is composed of the CCC subcomplex and the retriever subcomplex. May modulate activity of cullin-RING E3 ubiquitin ligase (CRL) complexes. May down-regulate activation of NF-kappa-B. The chain is COMM domain-containing protein 2 (COMMD2) from Pongo abelii (Sumatran orangutan).